The following is a 145-amino-acid chain: Transcriptional regulator SlyA (145 aa).

Residues 2–135 form the HTH marR-type domain; sequence ELPLGSDLAR…LALLVSRLEK (134 aa). The H-T-H motif DNA-binding region spans 49–72; the sequence is QIQLAKAIGIEQPSLVRTLDQLEE.

The protein belongs to the SlyA family. As to quaternary structure, homodimer.

Transcription regulator that can specifically activate or repress expression of target genes. Regulates genes involved in production of antibiotic and exoenzyme virulence determinants in the phytopathogen. Required for the expression of the virulence protein evf during Drosophila melanogaster infection. The polypeptide is Transcriptional regulator SlyA (Pectobacterium carotovorum subsp. carotovorum (Erwinia carotovora subsp. carotovora)).